The sequence spans 82 residues: Small ribosomal subunit protein bS18 (82 aa).

Belongs to the bacterial ribosomal protein bS18 family. As to quaternary structure, part of the 30S ribosomal subunit. Forms a tight heterodimer with protein bS6.

In terms of biological role, binds as a heterodimer with protein bS6 to the central domain of the 16S rRNA, where it helps stabilize the platform of the 30S subunit. The sequence is that of Small ribosomal subunit protein bS18 from Chlamydia pneumoniae (Chlamydophila pneumoniae).